The sequence spans 236 residues: Ureidoacrylate amidohydrolase RutB (236 aa).

Asp24 (proton acceptor) is an active-site residue. Lys133 is a catalytic residue. Catalysis depends on Cys166, which acts as the Nucleophile.

The protein belongs to the isochorismatase family. RutB subfamily.

The enzyme catalyses (Z)-3-ureidoacrylate + H2O + H(+) = (Z)-3-aminoacrylate + NH4(+) + CO2. It carries out the reaction (Z)-3-ureidoacrylate + H2O = (Z)-3-aminoacrylate + carbamate + H(+). It catalyses the reaction (Z)-2-methylureidoacrylate + H2O + H(+) = (Z)-2-methylaminoacrylate + NH4(+) + CO2. Hydrolyzes ureidoacrylate to form aminoacrylate and carbamate. The carbamate hydrolyzes spontaneously, thereby releasing one of the nitrogen atoms of the pyrimidine ring as ammonia and one of its carbon atoms as CO2. The protein is Ureidoacrylate amidohydrolase RutB of Klebsiella pneumoniae (strain 342).